The chain runs to 618 residues: Dihydroxy-acid dehydratase (618 aa).

Mg(2+) is bound at residue aspartate 81. [2Fe-2S] cluster is bound at residue cysteine 122. Mg(2+) contacts are provided by aspartate 123 and lysine 124. Residue lysine 124 is modified to N6-carboxylysine. Cysteine 195 serves as a coordination point for [2Fe-2S] cluster. Glutamate 492 lines the Mg(2+) pocket. Residue serine 518 is the Proton acceptor of the active site.

The protein belongs to the IlvD/Edd family. In terms of assembly, homodimer. [2Fe-2S] cluster serves as cofactor. Mg(2+) is required as a cofactor.

It catalyses the reaction (2R)-2,3-dihydroxy-3-methylbutanoate = 3-methyl-2-oxobutanoate + H2O. It carries out the reaction (2R,3R)-2,3-dihydroxy-3-methylpentanoate = (S)-3-methyl-2-oxopentanoate + H2O. Its pathway is amino-acid biosynthesis; L-isoleucine biosynthesis; L-isoleucine from 2-oxobutanoate: step 3/4. It functions in the pathway amino-acid biosynthesis; L-valine biosynthesis; L-valine from pyruvate: step 3/4. Functionally, functions in the biosynthesis of branched-chain amino acids. Catalyzes the dehydration of (2R,3R)-2,3-dihydroxy-3-methylpentanoate (2,3-dihydroxy-3-methylvalerate) into 2-oxo-3-methylpentanoate (2-oxo-3-methylvalerate) and of (2R)-2,3-dihydroxy-3-methylbutanoate (2,3-dihydroxyisovalerate) into 2-oxo-3-methylbutanoate (2-oxoisovalerate), the penultimate precursor to L-isoleucine and L-valine, respectively. The sequence is that of Dihydroxy-acid dehydratase from Zymomonas mobilis subsp. mobilis (strain ATCC 31821 / ZM4 / CP4).